The chain runs to 345 residues: Tetraacyldisaccharide 4'-kinase (345 aa).

ATP is bound at residue 61 to 68 (TAGGTGKT).

Belongs to the LpxK family.

It carries out the reaction a lipid A disaccharide + ATP = a lipid IVA + ADP + H(+). Its pathway is glycolipid biosynthesis; lipid IV(A) biosynthesis; lipid IV(A) from (3R)-3-hydroxytetradecanoyl-[acyl-carrier-protein] and UDP-N-acetyl-alpha-D-glucosamine: step 6/6. Its function is as follows. Transfers the gamma-phosphate of ATP to the 4'-position of a tetraacyldisaccharide 1-phosphate intermediate (termed DS-1-P) to form tetraacyldisaccharide 1,4'-bis-phosphate (lipid IVA). The polypeptide is Tetraacyldisaccharide 4'-kinase (Xanthomonas axonopodis pv. citri (strain 306)).